The sequence spans 568 residues: Phosphoprotein (568 aa).

The interval 1 to 24 (MDQDAFFFERDPEAEGEAPRKQES) is disordered. Basic and acidic residues predominate over residues 7-23 (FFERDPEAEGEAPRKQE). The interval 33–41 (DVVLSYKPT) is N0 binding. Residues 45–324 (EDRSWLHGII…ANEEETSNTS (280 aa)) are disordered. Positions 58 to 105 (EENKPSCKADDNNKDRAISTPTQDHRSGEESGISRRTSESKTETHARL) are enriched in basic and acidic residues. Residues 107-121 (DQQSIHRASRRGTSP) show a composition bias toward polar residues. 2 stretches are compositionally biased toward basic and acidic residues: residues 132 to 144 (RNTRIDEDSPNER) and 151 to 167 (LTDEDRKMAEDSNKREE). Over residues 190–208 (RTNNNGRSMETSSTHSTRI) the composition is skewed to polar residues. The segment covering 239-253 (TRSERTQNSELHKST) has biased composition (basic and acidic residues). Over residues 294–305 (YTMNNANNNTKS) the composition is skewed to polar residues. A multimerization region spans residues 344–411 (FELSRSASHV…SSRDLHKRFS (68 aa)). Residues 387 to 416 (EENRTLLKQIQEEINSSRDLHKRFSEYQKE) are a coiled coil. The l protein binding stretch occupies residues 412–445 (EYQKEQNSLMMANLSTLHIITDRGGKTGDPSDTT). Residues 434 to 455 (RGGKTGDPSDTTRSPSVFTKGK) form a disordered region. A compositionally biased stretch (polar residues) spans 441-450 (PSDTTRSPSV). Residues 479–568 (DLIREDELRD…FEEDIDSLTN (90 aa)) form an interaction with the nucleocapsid (N-RNA) region.

It belongs to the respirovirus P protein family. Homotetramer. Interacts (via multimerization domain) with polymerase L; this interaction forms the polymerase complex. Interacts (via N-terminus) with N0; this interaction allows P to chaperon N0 before encapsidation and form the N-P complex. Interacts (via C-terminus) with N-RNA template; this interaction positions the polymerase on the template.

In terms of biological role, essential cofactor of the RNA polymerase L that plays a central role in the transcription and replication by forming the polymerase complex with RNA polymerase L and recruiting L to the genomic N-RNA template for RNA synthesis. Also plays a central role in the encapsidation of nascent RNA chains by forming the encapsidation complex with the nucleocapsid protein N (N-P complex). Acts as a chaperone for newly synthesized free N protein, so-called N0, allowing encapsidation of nascent RNA chains during replication. The nucleoprotein protein N prevents excessive phosphorylation of P, which leads to down-regulation of viral transcription/ replication. Participates, together with N, in the formation of viral factories (viroplasms), which are large inclusions in the host cytoplasm where replication takes place. Recruits host PI4KB and remodel the host endoplasmic reticulum membrane to form viral replication factories. This chain is Phosphoprotein (P/C), found in Human parainfluenza 1 virus (strain C39) (HPIV-1).